Reading from the N-terminus, the 492-residue chain is Protein odr-4 homolog (492 aa).

Residues Leu251 to Ser270 form a disordered region. Positions Thr254 to Thr268 are enriched in low complexity. Residues Met469–Leu489 form a helical membrane-spanning segment.

It belongs to the ODR-4 family.

The protein localises to the membrane. Its function is as follows. May play a role in the trafficking of a subset of G-protein coupled receptors. The polypeptide is Protein odr-4 homolog (Drosophila melanogaster (Fruit fly)).